Reading from the N-terminus, the 174-residue chain is Ribosome maturation factor RimM (174 aa).

Residues 91–164 (DDAWYPHQLQ…KVVLSPPGGL (74 aa)) form the PRC barrel domain.

It belongs to the RimM family. Binds ribosomal protein uS19.

It is found in the cytoplasm. Functionally, an accessory protein needed during the final step in the assembly of 30S ribosomal subunit, possibly for assembly of the head region. Essential for efficient processing of 16S rRNA. May be needed both before and after RbfA during the maturation of 16S rRNA. It has affinity for free ribosomal 30S subunits but not for 70S ribosomes. The sequence is that of Ribosome maturation factor RimM from Kineococcus radiotolerans (strain ATCC BAA-149 / DSM 14245 / SRS30216).